Here is a 419-residue protein sequence, read N- to C-terminus: Epothilone C/D epoxidase (419 aa).

Ala-180 and Gly-304 together coordinate substrate. Heme is bound at residue Cys-365.

This sequence belongs to the cytochrome P450 family. Heme is required as a cofactor.

The enzyme catalyses epothilone C + 2 reduced [2Fe-2S]-[ferredoxin] + O2 + 2 H(+) = epothilone A + 2 oxidized [2Fe-2S]-[ferredoxin] + H2O. It catalyses the reaction epothilone D + 2 reduced [2Fe-2S]-[ferredoxin] + O2 + 2 H(+) = epothilone B + 2 oxidized [2Fe-2S]-[ferredoxin] + H2O. Its pathway is secondary metabolite biosynthesis; epothilone biosynthesis. Involved in the biosynthesis of epothilones, macrolactones which have a narrow anti-fungal spectrum and microtubule-stabilizing activity. Catalyzes the epoxidation of epothilones C and D to epothilones A and B, respectively. This Sorangium cellulosum (Polyangium cellulosum) protein is Epothilone C/D epoxidase (cyp167A1).